The primary structure comprises 852 residues: DNA double-strand break repair Rad50 ATPase (852 aa).

Residues N32, G33, A34, G35, K36, S37, S38, R53, Y54, D59, V61, and R63 each coordinate ATP. S37 contacts Mg(2+). A Mg(2+)-binding site is contributed by Q142. Coiled coils occupy residues 155 to 345 (EITE…EELD) and 389 to 427 (LLSI…QIAS). One can recognise a Zinc-hook domain in the interval 389-488 (LLSIEKTENE…SLSSLIEDLL (100 aa)). Zn(2+) is bound by residues C435 and C438. Coiled coils occupy residues 460–488 (DQKR…EDLL) and 534–711 (KIEE…LFDK). D797 is a Mg(2+) binding site.

The protein belongs to the SMC family. RAD50 subfamily. In terms of assembly, homodimer. Forms a complex with Mre11. It depends on Zn(2+) as a cofactor.

The catalysed reaction is ATP + H2O = ADP + phosphate + H(+). Functionally, involved in DNA double-strand break repair (DSBR). The Rad50/Mre11 complex possesses single-strand endonuclease activity and ATP-dependent double-strand-specific 3'-5' exonuclease activity. Rad50 provides an ATP-dependent control of Mre11 by positioning DNA ends into the Mre11 active site: ATP-binding induces a large structural change from an open form with accessible Mre11 nuclease sites into a closed form. The protein is DNA double-strand break repair Rad50 ATPase of Thermotoga maritima (strain ATCC 43589 / DSM 3109 / JCM 10099 / NBRC 100826 / MSB8).